An 865-amino-acid chain; its full sequence is Probable beta-glucosidase J (865 aa).

The active site involves aspartate 233. N-linked (GlcNAc...) asparagine glycans are attached at residues asparagine 330, asparagine 447, asparagine 503, and asparagine 764. The 169-residue stretch at 411-579 (TGQPGYTFRV…DTDTAIQQAV (169 aa)) folds into the PA14 domain.

The protein belongs to the glycosyl hydrolase 3 family.

It is found in the secreted. It catalyses the reaction Hydrolysis of terminal, non-reducing beta-D-glucosyl residues with release of beta-D-glucose.. Its pathway is glycan metabolism; cellulose degradation. Its function is as follows. Beta-glucosidases are one of a number of cellulolytic enzymes involved in the degradation of cellulosic biomass. Catalyzes the last step releasing glucose from the inhibitory cellobiose. The chain is Probable beta-glucosidase J (bglJ) from Aspergillus fumigatus (strain ATCC MYA-4609 / CBS 101355 / FGSC A1100 / Af293) (Neosartorya fumigata).